The primary structure comprises 457 residues: Phosphoglucosamine mutase (457 aa).

Ser-109 acts as the Phosphoserine intermediate in catalysis. Mg(2+) contacts are provided by Ser-109, Asp-251, Asp-253, and Asp-255. Phosphoserine is present on Ser-109.

Belongs to the phosphohexose mutase family. Mg(2+) is required as a cofactor. Post-translationally, activated by phosphorylation.

The enzyme catalyses alpha-D-glucosamine 1-phosphate = D-glucosamine 6-phosphate. Catalyzes the conversion of glucosamine-6-phosphate to glucosamine-1-phosphate. The polypeptide is Phosphoglucosamine mutase (Bdellovibrio bacteriovorus (strain ATCC 15356 / DSM 50701 / NCIMB 9529 / HD100)).